Consider the following 447-residue polypeptide: Methylenetetrahydrofolate--tRNA-(uracil-5-)-methyltransferase TrmFO (447 aa).

FAD is bound at residue 10-15 (GAGLAG).

Belongs to the MnmG family. TrmFO subfamily. Requires FAD as cofactor.

It localises to the cytoplasm. The catalysed reaction is uridine(54) in tRNA + (6R)-5,10-methylene-5,6,7,8-tetrahydrofolate + NADH + H(+) = 5-methyluridine(54) in tRNA + (6S)-5,6,7,8-tetrahydrofolate + NAD(+). The enzyme catalyses uridine(54) in tRNA + (6R)-5,10-methylene-5,6,7,8-tetrahydrofolate + NADPH + H(+) = 5-methyluridine(54) in tRNA + (6S)-5,6,7,8-tetrahydrofolate + NADP(+). In terms of biological role, catalyzes the folate-dependent formation of 5-methyl-uridine at position 54 (M-5-U54) in all tRNAs. The sequence is that of Methylenetetrahydrofolate--tRNA-(uracil-5-)-methyltransferase TrmFO from Symbiobacterium thermophilum (strain DSM 24528 / JCM 14929 / IAM 14863 / T).